Here is a 214-residue protein sequence, read N- to C-terminus: uncharacterized protein (214 aa).

A helical transmembrane segment spans residues 9-31 (FLYFAISVLVNLLFLKILYIYLF). A disordered region spans residues 53-74 (APPKKPGKPQKKVVKKKPEAVS). Residues 54–67 (PPKKPGKPQKKVVK) show a composition bias toward basic residues.

It is found in the membrane. This is an uncharacterized protein from Aquifex aeolicus (strain VF5).